A 428-amino-acid chain; its full sequence is GTPase Obg (428 aa).

Positions 1–158 constitute an Obg domain; that stretch reads MFIDEVIITV…IKVKLELKLL (158 aa). In terms of domain architecture, OBG-type G spans 159-330; it reads ADVALVGYPS…ILYKTYDMLS (172 aa). Residues 165–172, 190–194, 212–215, 282–285, and 311–313 each bind GTP; these read GYPSVGKS, FTTLE, DIPG, NKMD, and SVL. Residues S172 and T192 each coordinate Mg(2+). The OCT domain occupies 349-428; it reads ELKIEKEDFE…IADVEFEYFE (80 aa).

The protein belongs to the TRAFAC class OBG-HflX-like GTPase superfamily. OBG GTPase family. As to quaternary structure, monomer. The cofactor is Mg(2+).

Its subcellular location is the cytoplasm. In terms of biological role, an essential GTPase which binds GTP, GDP and possibly (p)ppGpp with moderate affinity, with high nucleotide exchange rates and a fairly low GTP hydrolysis rate. Plays a role in control of the cell cycle, stress response, ribosome biogenesis and in those bacteria that undergo differentiation, in morphogenesis control. This chain is GTPase Obg, found in Fusobacterium nucleatum subsp. nucleatum (strain ATCC 25586 / DSM 15643 / BCRC 10681 / CIP 101130 / JCM 8532 / KCTC 2640 / LMG 13131 / VPI 4355).